Consider the following 397-residue polypeptide: Decapping and exoribonuclease protein (397 aa).

Over residues 1–10 the composition is skewed to basic residues; that stretch reads MEPRGTKRKA. Residues 1–30 form a disordered region; the sequence is MEPRGTKRKAEKTEVEKPLNKLPRAVPSLR. Substrate is bound by residues arginine 58, glutamate 101, and 131 to 133; that span reads WRG. Position 185 (methionine 185) interacts with adenosine 3',5'-bisphosphate. Residue glutamate 192 participates in Mg(2+) binding. 2 residues coordinate substrate: cysteine 217 and glutamate 234. 4 residues coordinate Mg(2+): glutamate 234, aspartate 236, glutamate 253, and leucine 254. Aspartate 236 contributes to the adenosine 3',5'-bisphosphate binding site. The segment at 253–256 is adenosine 3',5'-bisphosphate; inhibitor; that stretch reads ELKT. Positions 255 and 280 each coordinate substrate. Glutamine 280 is an adenosine 3',5'-bisphosphate binding site. The residue at position 392 (threonine 392) is a Phosphothreonine. Position 394 is a phosphoserine (serine 394).

The protein belongs to the DXO/Dom3Z family. It depends on Mg(2+) as a cofactor.

The protein resides in the nucleus. The catalysed reaction is a 5'-end triphospho-ribonucleoside in mRNA + H2O = a 5'-end phospho-ribonucleoside in mRNA + diphosphate + H(+). The enzyme catalyses a 5'-end NAD(+)-phospho-ribonucleoside in mRNA + H2O = a 5'-end phospho-ribonucleoside in mRNA + NAD(+) + H(+). It carries out the reaction a 5'-end NAD(+)-phospho-ribonucleoside in snoRNA + H2O = a 5'-end phospho-ribonucleoside in snoRNA + NAD(+) + H(+). It catalyses the reaction a 5'-end (N(7)-methyl 5'-triphosphoguanosine)-ribonucleoside-ribonucleotide in mRNA + H2O = a (N(7)-methyl 5'-triphosphoguanosine)-nucleoside + a 5'-end phospho-ribonucleoside in mRNA + H(+). The catalysed reaction is a 5'-end FAD-phospho-ribonucleoside in mRNA + H2O = a 5'-end phospho-ribonucleoside in mRNA + FAD + H(+). The enzyme catalyses a 5'-end CoA-ribonucleoside in mRNA + H2O = 3'-dephospho-CoA + a 5'-end phospho-ribonucleoside in mRNA + H(+). Its activity is regulated as follows. The 5'-3' exoribonuclease activity is inhibited by adenosine 3',5'-bisphosphate. Decapping enzyme for NAD-capped RNAs: specifically hydrolyzes the nicotinamide adenine dinucleotide (NAD) cap from a subset of RNAs by removing the entire NAD moiety from the 5'-end of an NAD-capped RNA. The NAD-cap is present at the 5'-end of some RNAs and snoRNAs. In contrast to the canonical 5'-end N7 methylguanosine (m7G) cap, the NAD cap promotes mRNA decay. Preferentially acts on NAD-capped transcripts in response to environmental stress. Also acts as a non-canonical decapping enzyme that removes the entire cap structure of m7G capped or incompletely capped RNAs and mediates their subsequent degradation. Specifically degrades pre-mRNAs with a defective 5'-end m7G cap and is part of a pre-mRNA capping quality control. Has decapping activity toward incomplete 5'-end m7G cap mRNAs such as unmethylated 5'-end-capped RNA (cap0), while it has no activity toward 2'-O-ribose methylated m7G cap (cap1). In contrast to canonical decapping enzymes DCP2 and NUDT16, which cleave the cap within the triphosphate linkage, the decapping activity releases the entire cap structure GpppN and a 5'-end monophosphate RNA. Also has 5'-3' exoribonuclease activities: The 5'-end monophosphate RNA is then degraded by the 5'-3' exoribonuclease activity, enabling this enzyme to decap and degrade incompletely capped mRNAs. Also possesses RNA 5'-pyrophosphohydrolase activity by hydrolyzing the 5'-end triphosphate to release pyrophosphates. Exhibits decapping activity towards FAD-capped RNAs. Exhibits decapping activity towards dpCoA-capped RNAs in vitro. The polypeptide is Decapping and exoribonuclease protein (Mus musculus (Mouse)).